The following is a 122-amino-acid chain: Protein SPIRAL1-like 3 (122 aa).

2 disordered regions span residues 1–78 and 96–122; these read MGKA…NNYF and KVHA…SGNK. The span at 32–61 shows a compositional bias: low complexity; sequence TMGTTTTTTTTTTTDGTGGRPITTTTTTVT. At Ser-73 the chain carries Phosphoserine.

The protein belongs to the SPIRAL1 family. Ubiquitous. Preferentially expressed in above-ground organs.

Its function is as follows. Acts redundantly with SPR1 in maintaining the cortical microtubules organization essential for anisotropic cell growth. This chain is Protein SPIRAL1-like 3 (SP1L3), found in Arabidopsis thaliana (Mouse-ear cress).